Consider the following 409-residue polypeptide: Secreted LysM effector Blys2 (409 aa).

The first 20 residues, Met-1 to Ala-20, serve as a signal peptide directing secretion. Positions Tyr-24–Val-71 constitute a LysM 1 domain. Asn-58 carries an N-linked (GlcNAc...) asparagine glycan. The interval Asn-74 to Ser-111 is disordered. Over residues Ser-87–Thr-106 the composition is skewed to low complexity. LysM domains follow at residues Ala-129–Val-176, Lys-206–Val-253, Lys-283–Ile-330, and Lys-357–Val-405.

It belongs to the secreted LysM effector family.

Its subcellular location is the secreted. It localises to the cell wall. Secreted effector that enables the plant pathogenic fungus to manipulate host defenses for successful infection. Required for the full virulence to infect insect hosts. In contrast to Blys5, Blys2 is not able to protect fungal hyphae against the hydrolytic activity of chitinase but plays an important role in evasion of insect immunities. Binds chitin. Coats and protects the cell walls of insect pathogens from host cell recognition. The protein is Secreted LysM effector Blys2 of Beauveria bassiana (strain ARSEF 2860) (White muscardine disease fungus).